Consider the following 296-residue polypeptide: Giardin subunit alpha-2 (296 aa).

Annexin repeat units lie at residues 2–71 (PKLS…MDLF), 73–143 (DRHE…MEKW), 153–223 (GSPD…AHFA), and 226–293 (GMHK…TLWR).

This sequence belongs to the annexin family. Giardin subunit alpha subfamily.

Its subcellular location is the cytoplasm. It localises to the cytoskeleton. In terms of biological role, giardins are involved in parasite attachment to the intestinal mucosa and in the cytoskeletal disassembly and reassembly that marks the transition from infectious trophozoite to transmissible cyst. They may interact with other cytoskeletal proteins such as microtubules in the microribbons or crossbridges, to maintain the integrity of the ventral disk. This is Giardin subunit alpha-2 from Giardia intestinalis (Giardia lamblia).